The primary structure comprises 362 residues: N5-carboxyaminoimidazole ribonucleotide synthase (362 aa).

ATP is bound by residues R85, K125, 130–136 (GYDGRGQ), 158–161 (EKFI), E166, and 244–245 (NE). Residues 89-274 (KSLLDELNLS…QFELHLRALL (186 aa)) enclose the ATP-grasp domain.

This sequence belongs to the PurK/PurT family. As to quaternary structure, homodimer.

It catalyses the reaction 5-amino-1-(5-phospho-beta-D-ribosyl)imidazole + hydrogencarbonate + ATP = 5-carboxyamino-1-(5-phospho-D-ribosyl)imidazole + ADP + phosphate + 2 H(+). It participates in purine metabolism; IMP biosynthesis via de novo pathway; 5-amino-1-(5-phospho-D-ribosyl)imidazole-4-carboxylate from 5-amino-1-(5-phospho-D-ribosyl)imidazole (N5-CAIR route): step 1/2. Functionally, catalyzes the ATP-dependent conversion of 5-aminoimidazole ribonucleotide (AIR) and HCO(3)(-) to N5-carboxyaminoimidazole ribonucleotide (N5-CAIR). This chain is N5-carboxyaminoimidazole ribonucleotide synthase, found in Haemophilus influenzae (strain ATCC 51907 / DSM 11121 / KW20 / Rd).